A 157-amino-acid chain; its full sequence is Crossover junction endodeoxyribonuclease RuvC (157 aa).

Active-site residues include Asp-7, Glu-67, and Asp-139. The Mg(2+) site is built by Asp-7, Glu-67, and Asp-139.

Belongs to the RuvC family. In terms of assembly, homodimer which binds Holliday junction (HJ) DNA. The HJ becomes 2-fold symmetrical on binding to RuvC with unstacked arms; it has a different conformation from HJ DNA in complex with RuvA. In the full resolvosome a probable DNA-RuvA(4)-RuvB(12)-RuvC(2) complex forms which resolves the HJ. Mg(2+) is required as a cofactor.

Its subcellular location is the cytoplasm. The enzyme catalyses Endonucleolytic cleavage at a junction such as a reciprocal single-stranded crossover between two homologous DNA duplexes (Holliday junction).. Functionally, the RuvA-RuvB-RuvC complex processes Holliday junction (HJ) DNA during genetic recombination and DNA repair. Endonuclease that resolves HJ intermediates. Cleaves cruciform DNA by making single-stranded nicks across the HJ at symmetrical positions within the homologous arms, yielding a 5'-phosphate and a 3'-hydroxyl group; requires a central core of homology in the junction. The consensus cleavage sequence is 5'-(A/T)TT(C/G)-3'. Cleavage occurs on the 3'-side of the TT dinucleotide at the point of strand exchange. HJ branch migration catalyzed by RuvA-RuvB allows RuvC to scan DNA until it finds its consensus sequence, where it cleaves and resolves the cruciform DNA. The sequence is that of Crossover junction endodeoxyribonuclease RuvC from Prochlorococcus marinus subsp. pastoris (strain CCMP1986 / NIES-2087 / MED4).